The sequence spans 310 residues: Very-long-chain enoyl-CoA reductase (310 aa).

The Cytoplasmic segment spans residues 1–85 (MPITIKSRSK…KDLGPQISWR (85 aa)). A helical membrane pass occupies residues 86-106 (LVFFCEYLGPVLVHSLFYYLS). The Lumenal segment spans residues 107-141 (TIPTVVDRWHSASSDYNPFLNRVAYFLILGHYGKR). Residues 142 to 162 (LFETLFVHQFSLATMPIFNLF) form a helical membrane-spanning segment. At 163-165 (KNC) the chain is on the cytoplasmic side. A helical transmembrane segment spans residues 166–186 (FHYWVLSGLISFGYFGYGFPF). Residues 187–201 (GNAKLFKYYSYLKLD) are Lumenal-facing. Residues 202-222 (DLSTLIGLFVLSELWNFYCHI) form a helical membrane-spanning segment. Residues 223-242 (KLRLWGDYQKKHGNAKIRVP) are Cytoplasmic-facing. The chain crosses the membrane as a helical span at residues 243 to 265 (LNQGIFNLFVAPNYTFEVWSWIW). The Lumenal portion of the chain corresponds to 266–268 (FTF). Residues 269 to 291 (VFKFNLFAVLFLTVSTAQMYAWA) form a helical membrane-spanning segment. The Cytoplasmic portion of the chain corresponds to 292–310 (QKKNKKYHTRRAFLIPFVF).

It belongs to the steroid 5-alpha reductase family. As to quaternary structure, interacts with the fatty acid elongation system components ELO2 and ELO3. Interacts with NVJ1.

It is found in the endoplasmic reticulum membrane. The enzyme catalyses a very-long-chain 2,3-saturated fatty acyl-CoA + NADP(+) = a very-long-chain (2E)-enoyl-CoA + NADPH + H(+). The catalysed reaction is octadecanoyl-CoA + NADP(+) = (2E)-octadecenoyl-CoA + NADPH + H(+). It carries out the reaction (2E)-eicosenoyl-CoA + NADPH + H(+) = eicosanoyl-CoA + NADP(+). It catalyses the reaction (2E)-docosenoyl-CoA + NADPH + H(+) = docosanoyl-CoA + NADP(+). The enzyme catalyses (2E)-tetracosenoyl-CoA + NADPH + H(+) = tetracosanoyl-CoA + NADP(+). The catalysed reaction is (2E)-hexacosenoyl-CoA + NADPH + H(+) = hexacosanoyl-CoA + NADP(+). Its pathway is lipid metabolism; fatty acid biosynthesis. In terms of biological role, catalyzes the last of the four reactions of the long-chain fatty acids elongation cycle. This endoplasmic reticulum-bound enzymatic process, allows the addition of 2 carbons to the chain of long- and very long-chain fatty acids/VLCFAs per cycle. This enzyme reduces the trans-2,3-enoyl-CoA fatty acid intermediate to an acyl-CoA that can be further elongated by entering a new cycle of elongation. Thereby, it participates in the production of VLCFAs of different chain lengths that are involved in multiple biological processes as precursors of membrane lipids and lipid mediators. VLCFAs serve for instance as precursors for ceramide and sphingolipids. Required for normal biogenesis of piecemeal microautophagy of the nucleus (PMN) bleps and vesicles during nutrient stress. This chain is Very-long-chain enoyl-CoA reductase (TSC13), found in Saccharomyces cerevisiae (strain ATCC 204508 / S288c) (Baker's yeast).